The chain runs to 345 residues: Fe-S cluster assembly protein DRE2 (345 aa).

Residues 29-163 are N-terminal SAM-like domain; that stretch reads GDSGDRTLLL…KPDYAEQEVV (135 aa). Residues 164 to 237 are linker; the sequence is PLRFGAKKVN…EDTLLTEADL (74 aa). [2Fe-2S] cluster contacts are provided by C247, C258, C261, and C263. Residues 247–263 are fe-S binding site A; the sequence is CAPQPGKKRRACKDCTC. [4Fe-4S] cluster contacts are provided by C308, C311, C319, and C322. Short sequence motifs (cx2C motif) lie at residues 308-311 and 319-322; these read CNSC and CADC. The segment at 308–322 is fe-S binding site B; the sequence is CNSCYLGDAFRCADC.

Belongs to the anamorsin family. As to quaternary structure, monomer. Interacts with TAH18. Interacts with MIA40. [2Fe-2S] cluster is required as a cofactor. It depends on [4Fe-4S] cluster as a cofactor.

It is found in the cytoplasm. It localises to the mitochondrion intermembrane space. Functionally, component of the cytosolic iron-sulfur (Fe-S) protein assembly (CIA) machinery required for the maturation of extramitochondrial Fe-S proteins. Part of an electron transfer chain functioning in an early step of cytosolic Fe-S biogenesis, facilitating the de novo assembly of a [4Fe-4S] cluster on the scaffold complex CFD1-NBP35. Electrons are transferred to DRE2 from NADPH via the FAD- and FMN-containing protein TAH18. TAH18-DRE2 are also required for the assembly of the diferric tyrosyl radical cofactor of ribonucleotide reductase (RNR), probably by providing electrons for reduction during radical cofactor maturation in the catalytic small subunit RNR2. The sequence is that of Fe-S cluster assembly protein DRE2 from Podospora anserina (strain S / ATCC MYA-4624 / DSM 980 / FGSC 10383) (Pleurage anserina).